The chain runs to 94 residues: Nucleoid-associated protein MYPE8070 (94 aa).

This sequence belongs to the YbaB/EbfC family. Homodimer.

Its subcellular location is the cytoplasm. It is found in the nucleoid. Its function is as follows. Binds to DNA and alters its conformation. May be involved in regulation of gene expression, nucleoid organization and DNA protection. The chain is Nucleoid-associated protein MYPE8070 from Malacoplasma penetrans (strain HF-2) (Mycoplasma penetrans).